A 202-amino-acid chain; its full sequence is ATP-dependent Clp protease proteolytic subunit (202 aa).

The active-site Nucleophile is the S106. H131 is a catalytic residue.

It belongs to the peptidase S14 family. In terms of assembly, fourteen ClpP subunits assemble into 2 heptameric rings which stack back to back to give a disk-like structure with a central cavity, resembling the structure of eukaryotic proteasomes.

The protein localises to the cytoplasm. The enzyme catalyses Hydrolysis of proteins to small peptides in the presence of ATP and magnesium. alpha-casein is the usual test substrate. In the absence of ATP, only oligopeptides shorter than five residues are hydrolyzed (such as succinyl-Leu-Tyr-|-NHMec, and Leu-Tyr-Leu-|-Tyr-Trp, in which cleavage of the -Tyr-|-Leu- and -Tyr-|-Trp bonds also occurs).. Cleaves peptides in various proteins in a process that requires ATP hydrolysis. Has a chymotrypsin-like activity. Plays a major role in the degradation of misfolded proteins. This is ATP-dependent Clp protease proteolytic subunit from Shewanella sp. (strain ANA-3).